A 188-amino-acid chain; its full sequence is MKVIASTLRKGNVVEKDGKLYVILFAENIHPGKGTPVTQLDMRRITDGVKVSERYRTTEQVERAFVEDREHTFLYSDGEGFHFMNPENYEQIAVPEDVVGDAAPYLQEGMAVMLSVHNGVPLTIELPQRVTLEVAETEPVLKGQTASSSYKPATLSNGVRTTVPPHIAAGTRVVVMTADGSYVERAKD.

The protein belongs to the elongation factor P family.

It localises to the cytoplasm. The protein operates within protein biosynthesis; polypeptide chain elongation. In terms of biological role, involved in peptide bond synthesis. Stimulates efficient translation and peptide-bond synthesis on native or reconstituted 70S ribosomes in vitro. Probably functions indirectly by altering the affinity of the ribosome for aminoacyl-tRNA, thus increasing their reactivity as acceptors for peptidyl transferase. In Methylobacterium radiotolerans (strain ATCC 27329 / DSM 1819 / JCM 2831 / NBRC 15690 / NCIMB 10815 / 0-1), this protein is Elongation factor P.